The chain runs to 236 residues: Eukaryotic translation initiation factor 3 subunit K (236 aa).

A PCI domain is found at 48–218 (CDCNANRTLL…EAKKAEIRED (171 aa)).

Belongs to the eIF-3 subunit K family.

It is found in the cytoplasm. In terms of biological role, component of the eukaryotic translation initiation factor 3 (eIF-3) complex, which is involved in protein synthesis of a specialized repertoire of mRNAs and, together with other initiation factors, stimulates binding of mRNA and methionyl-tRNAi to the 40S ribosome. The eIF-3 complex specifically targets and initiates translation of a subset of mRNAs involved in cell proliferation. In Pyricularia oryzae (strain Y34) (Rice blast fungus), this protein is Eukaryotic translation initiation factor 3 subunit K.